We begin with the raw amino-acid sequence, 398 residues long: O-methyltransferase mpaG' (398 aa).

Position 144 (serine 144) interacts with (4E,8E)-10-(4,6-dihydroxy-7-methyl-3-oxo-1,3-dihydro-2-benzofuran-5-yl)-4,8-dimethyldeca-4,8-dienoate. 4-farnesyl-3,5-dihydroxy-6-methylphthalide is bound at residue serine 144. Position 144 (serine 144) interacts with 6-O-desmethylmycophenolate. An S-adenosyl-L-homocysteine-binding site is contributed by asparagine 197. Tyrosine 199 contributes to the (4E,8E)-10-(4,6-dihydroxy-7-methyl-3-oxo-1,3-dihydro-2-benzofuran-5-yl)-4,8-dimethyldeca-4,8-dienoate binding site. Tyrosine 199 contacts 4-farnesyl-3,5-dihydroxy-6-methylphthalide. Tyrosine 199 contributes to the 6-O-desmethylmycophenolate binding site. S-adenosyl-L-homocysteine contacts are provided by tyrosine 203, aspartate 237, glycine 239, histidine 244, aspartate 245, aspartate 264, and arginine 265. Aspartate 264 contacts S-adenosyl-L-methionine. Positions 265 and 267 each coordinate (4E,8E)-10-(4,6-dihydroxy-7-methyl-3-oxo-1,3-dihydro-2-benzofuran-5-yl)-4,8-dimethyldeca-4,8-dienoate. Arginine 265 contacts 6-O-desmethylmycophenolate. Residues aspartate 286, isoleucine 287, and histidine 302 each contribute to the S-adenosyl-L-homocysteine site. Serine 303 contacts (4E,8E)-10-(4,6-dihydroxy-7-methyl-3-oxo-1,3-dihydro-2-benzofuran-5-yl)-4,8-dimethyldeca-4,8-dienoate. Serine 303 serves as a coordination point for 4-farnesyl-3,5-dihydroxy-6-methylphthalide. 6-O-desmethylmycophenolate is bound at residue serine 303. Residue histidine 306 is the Proton acceptor of the active site. Active-site residues include glutamate 335 and glutamate 362.

It belongs to the class I-like SAM-binding methyltransferase superfamily. Cation-independent O-methyltransferase family. Homodimer.

The protein resides in the cytoplasm. Its subcellular location is the cytosol. The catalysed reaction is (4E,8E)-10-(4,6-dihydroxy-7-methyl-3-oxo-1,3-dihydro-2-benzofuran-5-yl)-4,8-dimethyldeca-4,8-dienoate + S-adenosyl-L-methionine = (4E,8E)-10-(4-hydroxy-6-methoxy-7-methyl-3-oxo-1,3-dihydro-2-benzofuran-5-yl)-4,8-dimethyldeca-4,8-dienoate + S-adenosyl-L-homocysteine + H(+). The enzyme catalyses 4-farnesyl-3,5-dihydroxy-6-methylphthalide + S-adenosyl-L-methionine = 4-farnesyl-3,5-dihydroxy-6-methoxylphthalide + S-adenosyl-L-homocysteine + H(+). It carries out the reaction 6-O-desmethylmycophenolate + S-adenosyl-L-methionine = mycophenolate + S-adenosyl-L-homocysteine + H(+). The protein operates within secondary metabolite biosynthesis; terpenoid biosynthesis. Functionally, O-methyltransferase; part of the gene cluster that mediates the biosynthesis of mycophenolic acid (MPA), the first isolated antibiotic natural product in the world obtained from a culture of Penicillium brevicompactum in 1893. MpaG' catalyzes the 5-O-methylation of three precursors in MPA biosynthesis including demethylmycophenolic acid (DMMPA), 4-farnesyl-3,5-dihydroxy-6-methylphthalide (FDHMP), and an intermediate containing three fewer carbon atoms compared to FDHMP (FDHMP-3C) with different catalytic efficiencies. The first step of the pathway is the synthesis of 5-methylorsellinic acid (5MOA) by the cytosolic polyketide synthase mpaC. 5MOA is then converted to the phthalide compound 5,7-dihydroxy-4,6-dimethylphthalide (DHMP) by the endoplasmic reticulum-bound cytochrome P450 monooxygenase mpaDE. MpaDE first catalyzes hydroxylation of 5-MOA to 4,6-dihydroxy-2-(hydroxymethyl)-3-methylbenzoic acid (DHMB). MpaDE then acts as a lactone synthase that catalyzes the ring closure to convert DHMB into DHMP. The next step is the prenylation of DHMP by the Golgi apparatus-associated prenyltransferase mpaA to yield farnesyl-DHMP (FDHMP). The ER-bound oxygenase mpaB then mediates the oxidative cleavage the C19-C20 double bond in FDHMP to yield FDHMP-3C via a mycophenolic aldehyde intermediate. The O-methyltransferase mpaG catalyzes the methylation of FDHMP-3C to yield MFDHMP-3C. MpaG and mpaB can also switch the order in which they act and, in this case, the conversion of FDHMP to MFDHMP-3C can take place via 5-O-methyl-FDHMP (MFDHMP). After the cytosolic methylation of FDHMP-3C, MFDHMP-3C enters into peroxisomes probably via free diffusion due to its low molecular weight. Upon a peroxisomal CoA ligation reaction, catalyzed by a beta-oxidation component enzyme acyl-CoA ligase ACL891, MFDHMP-3C-CoA would then be restricted to peroxisomes for the following beta-oxidation pathway steps. The peroxisomal beta-oxidation machinery than converts MFDHMP-3C-CoA into MPA_CoA, via a beta-oxidation chain-shortening process. Finally mpaH acts as a peroxisomal acyl-CoA hydrolase with high substrate specificity toward MPA-CoA to release the final product MPA. MpaH can also hydrolyze DMMPA-CoA to release demethylmycophenolic acid (DMMPA) that is further converted to MPA by mpaG. In Penicillium brevicompactum, this protein is O-methyltransferase mpaG'.